A 1527-amino-acid chain; its full sequence is Rho guanine nucleotide exchange factor 11 (1527 aa).

The tract at residues methionine 1 to threonine 56 is disordered. Residues serine 2, serine 30, serine 32, and serine 51 each carry the phosphoserine modification. A compositionally biased stretch (low complexity) spans histidine 19 to serine 37. The PDZ domain maps to cysteine 64–serine 143. Residues proline 216–phenylalanine 247 are disordered. Phosphoserine is present on residues serine 262 and serine 268. Residue threonine 271 is modified to Phosphothreonine. Phosphoserine is present on residues serine 272 and serine 288. In terms of domain architecture, RGSL spans glutamate 323–arginine 503. A coiled-coil region spans residues leucine 461–alanine 487. Disordered regions lie at residues glutamate 506 to lysine 569 and asparagine 582 to serine 687. Positions serine 509–alanine 519 are enriched in polar residues. Composition is skewed to basic and acidic residues over residues serine 539–arginine 551 and lysine 624–valine 645. Serine 643 and serine 671 each carry phosphoserine. The segment covering leucine 656–leucine 672 has biased composition (low complexity). Residues threonine 676 and threonine 680 each carry the phosphothreonine modification. One can recognise a DH domain in the interval aspartate 742–alanine 931. The 115-residue stretch at lysine 973 to glutamine 1087 folds into the PH domain. Disordered stretches follow at residues threonine 1090–isoleucine 1184, glutamine 1231–alanine 1321, and alanine 1379–tyrosine 1411. A compositionally biased stretch (basic and acidic residues) spans glutamate 1126–proline 1138. The segment covering proline 1242–serine 1251 has biased composition (polar residues). Phosphoserine is present on residues serine 1299 and serine 1304. A compositionally biased stretch (low complexity) spans alanine 1312–alanine 1321. Serine 1462 and serine 1463 each carry phosphoserine. Phosphothreonine is present on residues threonine 1467 and threonine 1480. Positions threonine 1480–proline 1527 are disordered. Position 1485 is a phosphoserine (serine 1485). A compositionally biased stretch (polar residues) spans serine 1494–glycine 1503. The span at glutamate 1508–alanine 1518 shows a compositional bias: acidic residues.

Interacts with RHOA, GNA13 and SLC1A6. Interacts with GNA12, PLXNB1 and PLXNB2. Interacts (via DH domain) with GCSAM (via C-terminus). Found in a complex with ARHGEF11 and ARHGEF12; binding to ARHGEF11 and ARHGEF12 enhances CDC42 GEF activity of PLEKHG4B, and PLEKHG4B, in turn, inhibits ARHGEF11- and ARHGEF12-mediated RHOA activation. In terms of processing, phosphorylated by MAP kinase p38 (MAPK11, MAPK12, MAPK13 and/or MAPK14). Post-translationally, ubiquitinated by the BCR(KLHL20) E3 ubiquitin ligase complex when previously phosphorylated by MAP kinase p38 (MAPK11, MAPK12, MAPK13 and/or MAPK14), leading to its degradation, thereby restricting RhoA activity and facilitating growth cone spreading and neurite outgrowth.

Its subcellular location is the cytoplasm. The protein localises to the membrane. Functionally, may play a role in the regulation of RhoA GTPase by guanine nucleotide-binding alpha-12 (GNA12) and alpha-13 (GNA13). Acts as guanine nucleotide exchange factor (GEF) for RhoA GTPase and may act as GTPase-activating protein (GAP) for GNA12 and GNA13. Involved in neurotrophin-induced neurite outgrowth. The sequence is that of Rho guanine nucleotide exchange factor 11 (Arhgef11) from Rattus norvegicus (Rat).